Here is a 156-residue protein sequence, read N- to C-terminus: Dynein 16 kDa light chain, flagellar outer arm (156 aa).

The region spanning 2–116 (AAGLPPVQYS…LNQQVLSLTP (115 aa)) is the Thioredoxin domain. Cysteine 37 and cysteine 40 are oxidised to a cystine.

In terms of assembly, consists of at least 3 heavy chains (alpha, beta and gamma), 2 intermediate chains and 8 light chains.

It localises to the cell projection. It is found in the cilium. The protein localises to the flagellum. Its subcellular location is the cytoplasm. The protein resides in the cytoskeleton. It localises to the flagellum axoneme. Its function is as follows. May be involved in regulating the redox state of functionally important thiol groups within dynein. This Chlamydomonas reinhardtii (Chlamydomonas smithii) protein is Dynein 16 kDa light chain, flagellar outer arm.